We begin with the raw amino-acid sequence, 821 residues long: Integrator complex assembly factor BRAT1 (821 aa).

Positions 100–200 are required for interaction with NDFIP1; the sequence is PGLFGEPGPL…WPACAQKIMD (101 aa). HEAT repeat units follow at residues 495-531 and 544-576; these read PQFL…SRHW and SEVP…SSQG. The tract at residues 741-767 is disordered; that stretch reads GSPNTASAEATLPRWRAGEQAQPPGDQ. Ser742 bears the Phosphoserine mark. The BRAT1-like motif signature appears at 819–821; sequence DCY. Cys820 provides a ligand contact to Zn(2+).

The protein belongs to the BRAT1 family. Part of the multiprotein complex composed of BRAT1, WDR73, as well as integrator complex subunits INTS9 and INTS11. Interacts with BRCA1 and ATM. Interacts with MTOR and RPTOR. Interacts with NDFIP1. Interacts with SMC1A and PRKDC. In terms of processing, ubiquitinated by NEDD4, NEDD4L and ITCH; mono- and polyubiquitinated forms are detected. Ubiquitously expressed.

The protein resides in the nucleus. It localises to the cytoplasm. Component of a multiprotein complex required for the assembly of the RNA endonuclease module of the integrator complex. Associates with INTS9 and INTS11 in the cytoplasm and blocks the active site of INTS11 to inhibit the endonuclease activity of INTS11 before formation of the full integrator complex. Following dissociation of WDR73 of the complex, BRAT1 facilitates the nuclear import of the INTS9-INTS11 heterodimer. In the nucleus, INTS4 is integrated to the INTS9-INTS11 heterodimer and BRAT1 is released from the mature RNA endonuclease module by inositol hexakisphosphate (InsP6). BRAT1 is also involved in DNA damage response; activates kinases ATM, SMC1A and PRKDC by modulating their phosphorylation status following ionizing radiation (IR) stress. Plays a role in regulating mitochondrial function and cell proliferation. Required for protein stability of MTOR and MTOR-related proteins, and cell cycle progress by growth factors. This is Integrator complex assembly factor BRAT1 from Homo sapiens (Human).